Reading from the N-terminus, the 356-residue chain is Glucose 1-dehydrogenase (356 aa).

The segment at 1–26 (MDAIVVSKADRTPRLVDRPRPDPTPG) is disordered. A compositionally biased stretch (basic and acidic residues) spans 8–21 (KADRTPRLVDRPRP). Residue aspartate 38 participates in Zn(2+) binding. Position 40 (threonine 40) interacts with substrate. Residues histidine 63 and glutamate 64 each coordinate Zn(2+). The segment at 86–107 (TVRRPRGDPTPQFDRGQPDMAA) is disordered. The substrate site is built by glutamate 113 and glutamate 149. Glutamate 149 is a binding site for Zn(2+). NADP(+) is bound by residues 180 to 183 (NGSL), 205 to 206 (RR), 270 to 272 (LGV), and 300 to 302 (SVN). Asparagine 302 provides a ligand contact to substrate.

It belongs to the zinc-containing alcohol dehydrogenase family. Glucose 1-dehydrogenase subfamily. The cofactor is Zn(2+).

It carries out the reaction D-glucose + NAD(+) = D-glucono-1,5-lactone + NADH + H(+). The enzyme catalyses D-glucose + NADP(+) = D-glucono-1,5-lactone + NADPH + H(+). Catalyzes the NAD(P)(+)-dependent oxidation of D-glucose to D-gluconate via gluconolactone. Can utilize both NAD(+) and NADP(+) as electron acceptor. Is involved in the degradation of glucose through a modified Entner-Doudoroff pathway. This Halobacterium salinarum (strain ATCC 700922 / JCM 11081 / NRC-1) (Halobacterium halobium) protein is Glucose 1-dehydrogenase.